The primary structure comprises 843 residues: Protein P (843 aa).

Residues 1-177 (MPLSYQHFRR…FCGSPYSWEQ (177 aa)) are terminal protein domain (TP). The interval 178–346 (ELQHGSTSLN…YCLSHIINLL (169 aa)) is spacer. 2 disordered regions span residues 180-202 (QHGSTSLNGEKGHGTEPFCAQSS) and 226-315 (QHKQ…VGSE). Basic residues predominate over residues 239–249 (RSGRLRSRVHT). 2 stretches are compositionally biased toward polar residues: residues 262 to 277 (TGHSDNLATRSTSCFH) and 287 to 299 (PSLSTSKGHTSTG). The interval 347-690 (EDWGPCYEHG…YMNLYPVARQ (344 aa)) is polymerase/reverse transcriptase domain (RT). The Reverse transcriptase domain maps to 357 to 600 (EHHIRTPKTP…YSLHFMGYII (244 aa)). Mg(2+) is bound by residues aspartate 429, aspartate 551, and aspartate 552.

It belongs to the hepadnaviridae P protein family.

It carries out the reaction DNA(n) + a 2'-deoxyribonucleoside 5'-triphosphate = DNA(n+1) + diphosphate. It catalyses the reaction Endonucleolytic cleavage to 5'-phosphomonoester.. Activated by host HSP70 and HSP40 in vitro to be able to bind the epsilon loop of the pgRNA. Because deletion of the RNase H region renders the protein partly chaperone-independent, the chaperones may be needed indirectly to relieve occlusion of the RNA-binding site by this domain. Inhibited by several reverse-transcriptase inhibitors: Lamivudine, Adefovir and Entecavir. Multifunctional enzyme that converts the viral RNA genome into dsDNA in viral cytoplasmic capsids. This enzyme displays a DNA polymerase activity that can copy either DNA or RNA templates, and a ribonuclease H (RNase H) activity that cleaves the RNA strand of RNA-DNA heteroduplexes in a partially processive 3'- to 5'-endonucleasic mode. Neo-synthesized pregenomic RNA (pgRNA) are encapsidated together with the P protein, and reverse-transcribed inside the nucleocapsid. Initiation of reverse-transcription occurs first by binding the epsilon loop on the pgRNA genome, and is initiated by protein priming, thereby the 5'-end of (-)DNA is covalently linked to P protein. Partial (+)DNA is synthesized from the (-)DNA template and generates the relaxed circular DNA (RC-DNA) genome. After budding and infection, the RC-DNA migrates in the nucleus, and is converted into a plasmid-like covalently closed circular DNA (cccDNA). The activity of P protein does not seem to be necessary for cccDNA generation, and is presumably released from (+)DNA by host nuclear DNA repair machinery. This chain is Protein P, found in Hepatitis B virus genotype H (isolate United States/LAS2523/2002) (HBV-H).